Consider the following 1077-residue polypeptide: Histone deacetylase 4 (1077 aa).

Residues 66 to 169 (REQQLQQELL…GKESAVASTE (104 aa)) are a coiled coil. Residues 117 to 312 (MLAMKHQQEL…NSSSGNVSTE (196 aa)) are interaction with MEF2A. Over residues 132 to 162 (KLERHRQEQELEKQHREQKLQQLKNKEKGKE) the composition is skewed to basic and acidic residues. Disordered regions lie at residues 132–167 (KLER…AVAS), 204–225 (KTQH…ASYN), and 239–327 (PLRK…AETS). The span at 205 to 224 (TQHSSLDQSSPPQSGVSASY) shows a compositional bias: polar residues. At S209 the chain carries Phosphoserine. S245 is subject to Phosphoserine; by CaMK4 and SIK1. A compositionally biased stretch (basic and acidic residues) spans 258 to 273 (KVAERRSSPLLRRKDG). A compositionally biased stretch (low complexity) spans 289–310 (SACSSAPGSGPSSPNSSSGNVS). A PxLPxI/L motif; mediates interaction with ANKRA2 and 14-3-3 proteins motif is present at residues 348-353 (PSLPNI). S349 bears the Phosphoserine mark. S466 carries the phosphoserine; by CaMK4 and SIK1 modification. Disordered stretches follow at residues 508–530 (SKPS…ELRE), 542–582 (RLPG…RPAT), and 623–646 (RPLS…EPPT). Residues 515–530 (RQPESHPEETEEELRE) are compositionally biased toward basic and acidic residues. Residue K557 forms a Glycyl lysine isopeptide (Lys-Gly) (interchain with G-Cter in SUMO) linkage. S563, S630, and S631 each carry phosphoserine. A compositionally biased stretch (polar residues) spans 627–639 (RAQSSPASATFPM). The histone deacetylase stretch occupies residues 653–1077 (GLVYDTLMLK…EEPMEEEPPL (425 aa)). The Zn(2+) site is built by C665, C667, H673, and C744. Residue H796 is part of the active site. The Nuclear export signal motif lies at 1044 to 1077 (EEAETVTAMASLSVGVKPAEKRSEEEPMEEEPPL). The tract at residues 1052-1077 (MASLSVGVKPAEKRSEEEPMEEEPPL) is disordered.

Belongs to the histone deacetylase family. HD type 2 subfamily. As to quaternary structure, homodimer. Homodimerization via its N-terminal domain. Interacts with HDAC7. Interacts with MEF2A, MEF2C, MEF2D, MORC2 and NR2C1. Interacts with a 14-3-3 chaperone proteins in a phosphorylation dependent manner. Interacts with 14-3-3 protein YWHAB. Interacts with KDM5B and AHRR. Interacts with BTBD14B. Interacts with MYOCD. Interacts (via PxLPxI/L motif) with ANKRA2 (via ankyrin repeats). Interacts with CUL7 (as part of the 3M complex); negatively regulated by ANKRA2. Interacts with EP300 in the presence of TFAP2C. Interacts with HSPA1A and HSPA1B leading to their deacetylation at 'Lys-77'. Interacts with ZBTB7B; the interaction allows the recruitment of HDAC4 on CD8 loci for deacetylation and possible inhibition of CD8 genes expression. Interacts with DHX36. Interacts with SIK3; this interaction leads to HDAC4 retention in the cytoplasm. Phosphorylated by CaMK4 at Ser-245, Ser-466 and Ser-630. Phosphorylation at other residues by CaMK2D is required for the interaction with 14-3-3. Phosphorylation at Ser-349, within the PxLPxI/L motif, impairs the binding of ANKRA2 but generates a high-affinity docking site for 14-3-3. Post-translationally, sumoylation on Lys-557 is promoted by the E3 SUMO-protein ligase RANBP2, and prevented by phosphorylation by CaMK4.

Its subcellular location is the nucleus. It is found in the cytoplasm. The enzyme catalyses N(6)-acetyl-L-lysyl-[histone] + H2O = L-lysyl-[histone] + acetate. Its function is as follows. Responsible for the deacetylation of lysine residues on the N-terminal part of the core histones (H2A, H2B, H3 and H4). Histone deacetylation gives a tag for epigenetic repression and plays an important role in transcriptional regulation, cell cycle progression and developmental events. Histone deacetylases act via the formation of large multiprotein complexes. Involved in muscle maturation via its interaction with the myocyte enhancer factors such as MEF2A, MEF2C and MEF2D. Deacetylates HSPA1A and HSPA1B at 'Lys-77' leading to their preferential binding to co-chaperone STUB1. The chain is Histone deacetylase 4 (Hdac4) from Rattus norvegicus (Rat).